A 430-amino-acid polypeptide reads, in one-letter code: Terminal nucleotidyltransferase 5B (430 aa).

Positions 1–46 (MMPSESETESRDRAAAQVGTAAAAAVAKAAPAGGGPDPEASSASLG) are disordered. A compositionally biased stretch (low complexity) spans 15 to 44 (AAQVGTAAAAAVAKAAPAGGGPDPEASSAS).

Belongs to the TENT family.

It is found in the cytoplasm. Its subcellular location is the nucleus. The catalysed reaction is RNA(n) + ATP = RNA(n)-3'-adenine ribonucleotide + diphosphate. Its function is as follows. Catalyzes the transfer of one adenosine molecule from an ATP to an mRNA poly(A) tail bearing a 3'-OH terminal group in an ATP hydrolysis-dependent manner. May be involved in maintaining the translation efficiency of at least some genes through preventing degradation of their mRNAs. Prefers RNA molecules that are adenosine-rich close to 3'-end. In addition, may inhibit cell proliferation and cell cycle progression through ubiquitination of beta-catenin/CTNNB1. This Bos taurus (Bovine) protein is Terminal nucleotidyltransferase 5B.